Consider the following 359-residue polypeptide: Guanine nucleotide-binding protein G(o) subunit alpha (359 aa).

The interval 1-26 (MGGCVSATPEEREAKTRSSVIDRQQR) is disordered. A lipid anchor (N-myristoyl glycine) is attached at glycine 2. Cysteine 4 carries S-palmitoyl cysteine lipidation. In terms of domain architecture, G-alpha spans 34-359 (NTIKILLLGA…RENLEAANLL (326 aa)). The G1 motif stretch occupies residues 37 to 50 (KILLLGAGESGKST). GTP contacts are provided by residues 42-49 (GAGESGKS), 178-184 (LRSRVQT), 203-207 (DVGGQ), 272-275 (NKAD), and alanine 331. Residues serine 49 and threonine 184 each coordinate Mg(2+). Positions 176–184 (DVLRSRVQT) are G2 motif. The G3 motif stretch occupies residues 199–208 (YRVVDVGGQR). Residues 268 to 275 (ILFLNKAD) are G4 motif. Residues 329-334 (TTATDT) form a G5 motif region.

It belongs to the G-alpha family. G(i/o/t/z) subfamily. G proteins are composed of 3 units; alpha, beta and gamma. The alpha chain contains the guanine nucleotide binding site.

Guanine nucleotide-binding proteins (G proteins) are involved as modulators or transducers in various transmembrane signaling systems. The G(o) protein function is not clear. This Geodia cydonium (Sponge) protein is Guanine nucleotide-binding protein G(o) subunit alpha.